The chain runs to 110 residues: Nucleoid-associated protein ESA_02800 (110 aa).

A disordered region spans residues 89 to 110 (QKEKMASVSSGMQLPPGFKMPF).

It belongs to the YbaB/EbfC family. As to quaternary structure, homodimer.

The protein localises to the cytoplasm. It is found in the nucleoid. Its function is as follows. Binds to DNA and alters its conformation. May be involved in regulation of gene expression, nucleoid organization and DNA protection. The polypeptide is Nucleoid-associated protein ESA_02800 (Cronobacter sakazakii (strain ATCC BAA-894) (Enterobacter sakazakii)).